We begin with the raw amino-acid sequence, 55 residues long: Large ribosomal subunit protein bL33 (55 aa).

The protein belongs to the bacterial ribosomal protein bL33 family.

In Caulobacter vibrioides (strain ATCC 19089 / CIP 103742 / CB 15) (Caulobacter crescentus), this protein is Large ribosomal subunit protein bL33.